The primary structure comprises 453 residues: tRNA modification GTPase MnmE (453 aa).

3 residues coordinate (6S)-5-formyl-5,6,7,8-tetrahydrofolate: R22, E79, and K119. Residues 215 to 376 enclose the TrmE-type G domain; the sequence is GMKVVIAGRP…LKQHLKSLMG (162 aa). N225 lines the K(+) pocket. Residues 225-230, 244-250, 269-272, and 334-337 contribute to the GTP site; these read NAGKSS, TEIAGTT, DTAG, and NKAD. S229 contacts Mg(2+). K(+) is bound by residues T244, I246, and T249. T250 contributes to the Mg(2+) binding site. K453 serves as a coordination point for (6S)-5-formyl-5,6,7,8-tetrahydrofolate.

This sequence belongs to the TRAFAC class TrmE-Era-EngA-EngB-Septin-like GTPase superfamily. TrmE GTPase family. As to quaternary structure, homodimer. Heterotetramer of two MnmE and two MnmG subunits. Requires K(+) as cofactor.

The protein resides in the cytoplasm. Its function is as follows. Exhibits a very high intrinsic GTPase hydrolysis rate. Involved in the addition of a carboxymethylaminomethyl (cmnm) group at the wobble position (U34) of certain tRNAs, forming tRNA-cmnm(5)s(2)U34. In Shewanella denitrificans (strain OS217 / ATCC BAA-1090 / DSM 15013), this protein is tRNA modification GTPase MnmE.